The sequence spans 553 residues: Arginine--tRNA ligase (553 aa).

Residues 122 to 132 (ANPTGFLHVGH) carry the 'HIGH' region motif.

It belongs to the class-I aminoacyl-tRNA synthetase family. Monomer.

It localises to the cytoplasm. It catalyses the reaction tRNA(Arg) + L-arginine + ATP = L-arginyl-tRNA(Arg) + AMP + diphosphate. This is Arginine--tRNA ligase from Mesoplasma florum (strain ATCC 33453 / NBRC 100688 / NCTC 11704 / L1) (Acholeplasma florum).